Here is an 810-residue protein sequence, read N- to C-terminus: Plasminogen (810 aa).

An N-terminal signal peptide occupies residues 1-19 (MEHKEVVLLLLLFLKSGQG). A PAN domain is found at 20-98 (EPLDDYVNTQ…RDVVLFEKKV (79 aa)). Intrachain disulfides connect C49–C73, C53–C61, C103–C181, C124–C164, C152–C176, C185–C262, C188–C316, C206–C245, C234–C257, C275–C352, C296–C335, and C324–C347. 3 Kringle domains span residues 103 to 181 (CKTG…IPEC), 184 to 262 (ACMH…IPRC), and 275 to 352 (CLKG…IPSC). The disordered stretch occupies residues 126–145 (KWSSTSPHRPRFSPATHPSE). Residues R136, D158, and R172 each coordinate L-lysine. An O-linked (GalNAc...) threonine glycan is attached at T365. Cystine bridges form between C377–C454, C398–C437, C426–C449, C481–C560, C502–C543, C531–C555, C567–C685, C577–C585, and C607–C623. 2 consecutive Kringle domains span residues 377-454 (CYHG…LKKC) and 481-560 (CMFG…VPQC). Residues D432 and R445 each coordinate L-lysine. Residues 581–808 (VVGGCVANAH…FVTWIEGVMR (228 aa)) enclose the Peptidase S1 domain. Residue S597 is modified to Phosphoserine. Active-site charge relay system residues include H622 and D665. Position 688 is a phosphoserine (S688). Cystine bridges form between C699/C766, C729/C745, and C756/C784. S760 functions as the Charge relay system in the catalytic mechanism.

This sequence belongs to the peptidase S1 family. Plasminogen subfamily. As to quaternary structure, interacts with CSPG4 and AMOT. Interacts (via the Kringle domains) with HRG; the interaction tethers PLG to the cell surface and enhances its activation. Interacts (via Kringle 4 domain) with ADA; the interaction stimulates PLG activation when in complex with DPP4. Angiostatin: Interacts with ATP5F1A; the interaction inhibits most of the angiogenic effects of angiostatin. In terms of processing, in the presence of the inhibitor, the activation involves only cleavage after Arg-580, yielding two chains held together by two disulfide bonds. In the absence of the inhibitor, the activation involves additionally the removal of the activation peptide.

It localises to the secreted. It carries out the reaction Preferential cleavage: Lys-|-Xaa &gt; Arg-|-Xaa, higher selectivity than trypsin. Converts fibrin into soluble products.. Converted into plasmin by plasminogen activators, both plasminogen and its activator being bound to fibrin. Activated with catalytic amounts of streptokinase. Its function is as follows. Plasmin dissolves the fibrin of blood clots and acts as a proteolytic factor in a variety of other processes including embryonic development, tissue remodeling, tumor invasion, and inflammation. In ovulation, weakens the walls of the Graafian follicle. It activates the urokinase-type plasminogen activator, collagenases and several complement zymogens, such as C1, C4 and C5. Cleavage of fibronectin and laminin leads to cell detachment and apoptosis. Also cleaves fibrin, thrombospondin and von Willebrand factor. Its role in tissue remodeling and tumor invasion may be modulated by CSPG4. Binds to cells. The protein is Plasminogen (PLG) of Pongo abelii (Sumatran orangutan).